We begin with the raw amino-acid sequence, 699 residues long: MARKTPIERYRNIGICAHVDAGKTTTTERILFYTGLSHKIGEVHDGAATMDWMEQEQERGITITSAATTTFWRGMEAQFQDHRVNIIDTPGHVDFTIEVERSLRVLDGAVVVFCGSSGVEPQSETVWRQADKYHVPRMVFVNKMDRAGADFLRVVDQIKNRLGANPVPIQLNVGAEEDFKGVIDLIKMKMINWNEADQGMTFTYEEIPADMIELAEEWRNNLVEAAAEASEELMDKYLEEGELTEAEIKQALRARTLNNEIVLATCGSAFKNKGVQAVLDAVIEYLPSPIDVPAIKGIDENDNEVERHADDNEPFSALAFKIATDPFVGTLTFIRVYSGVVNTGDAVYNSVKQKKERFGRIVQMHANKREEIKEVRAGDIAAAIGLKDVTTGDTLCNSDHKVILERMEFPEPVIQIAVEPRSKADQEKMGIALGKLAAEDPSFRVETDAETGQTLISGMGELHLDIIVDRMKREFSVDCNVGKPQVAYRETIRGKSEVEGKFVRQSGGRGQYGHVWIKLEPSEPGAGFVFVDEVVGGVIPKEYISSVAKGIEEQMNSGVLAGYPVLDIKATLFDGSYHDVDSSEMAFKIAGSMAFKKGALEAQPVILEPMMKVEVTTPEDWMGDVVGDLNRRRGIIEGMDEGVAGLKIIRAQVPLSEMFGYATDLRSATQGRASYSMEFFEYAEVPKNIAEAIVAERGY.

The tr-type G domain occupies Glu-8–Ile-290. Residues Ala-17–Thr-24, Asp-88–His-92, and Asn-142–Asp-145 contribute to the GTP site.

It belongs to the TRAFAC class translation factor GTPase superfamily. Classic translation factor GTPase family. EF-G/EF-2 subfamily.

It localises to the cytoplasm. Functionally, catalyzes the GTP-dependent ribosomal translocation step during translation elongation. During this step, the ribosome changes from the pre-translocational (PRE) to the post-translocational (POST) state as the newly formed A-site-bound peptidyl-tRNA and P-site-bound deacylated tRNA move to the P and E sites, respectively. Catalyzes the coordinated movement of the two tRNA molecules, the mRNA and conformational changes in the ribosome. This Vibrio vulnificus (strain YJ016) protein is Elongation factor G 1.